A 283-amino-acid polypeptide reads, in one-letter code: Foldase protein PrsA 3 (283 aa).

The first 21 residues, 1–21 (MKKKKLFLGTIISCVVLALSA), serve as a signal peptide directing secretion. Residue cysteine 22 is the site of N-palmitoyl cysteine attachment. Cysteine 22 carries S-diacylglycerol cysteine lipidation. One can recognise a PpiC domain in the interval 132–222 (KPEMKVSHIL…YGYHIIKVTD (91 aa)).

The protein belongs to the PrsA family.

It localises to the cell membrane. It catalyses the reaction [protein]-peptidylproline (omega=180) = [protein]-peptidylproline (omega=0). Plays a major role in protein secretion by helping the post-translocational extracellular folding of several secreted proteins. Important for the secretion of the protective antigen. The three PsrA proteins in this organism show different but overlapping substrate specificities. This chain is Foldase protein PrsA 3 (prsA3), found in Bacillus anthracis.